The sequence spans 441 residues: Argininosuccinate lyase (441 aa).

Belongs to the lyase 1 family. Argininosuccinate lyase subfamily.

It localises to the cytoplasm. The enzyme catalyses 2-(N(omega)-L-arginino)succinate = fumarate + L-arginine. It participates in amino-acid biosynthesis; L-arginine biosynthesis; L-arginine from L-ornithine and carbamoyl phosphate: step 3/3. The polypeptide is Argininosuccinate lyase (Thermoanaerobacter pseudethanolicus (strain ATCC 33223 / 39E) (Clostridium thermohydrosulfuricum)).